The primary structure comprises 161 residues: Regulator of ribonuclease activity A (161 aa).

Belongs to the RraA family. As to quaternary structure, homotrimer. Binds to both RNA-binding sites in the C-terminal region of Rne and to RhlB.

It localises to the cytoplasm. Globally modulates RNA abundance by binding to RNase E (Rne) and regulating its endonucleolytic activity. Can modulate Rne action in a substrate-dependent manner by altering the composition of the degradosome. Modulates RNA-binding and helicase activities of the degradosome. The polypeptide is Regulator of ribonuclease activity A (Escherichia fergusonii (strain ATCC 35469 / DSM 13698 / CCUG 18766 / IAM 14443 / JCM 21226 / LMG 7866 / NBRC 102419 / NCTC 12128 / CDC 0568-73)).